Here is a 282-residue protein sequence, read N- to C-terminus: D-arabinitol 2-dehydrogenase [ribulose-forming] (282 aa).

Positions 32 and 53 each coordinate NADP(+). Residue Ser170 is the Proton donor of the active site. Tyr185, Lys189, Ile218, and Thr220 together coordinate NADP(+). Tyr185 acts as the Proton acceptor in catalysis. Lys189 functions as the Lowers pKa of active site Tyr in the catalytic mechanism.

It belongs to the short-chain dehydrogenases/reductases (SDR) family.

It catalyses the reaction D-arabinitol + NAD(+) = D-ribulose + NADH + H(+). It functions in the pathway carbohydrate metabolism; D-arabinitol metabolism. In terms of biological role, catalyzes the NAD(+)-dependent oxidation of D-arabinitol at carbon 4 to produce D-ribulose. This Candida tropicalis (Yeast) protein is D-arabinitol 2-dehydrogenase [ribulose-forming] (ARD).